Consider the following 423-residue polypeptide: Enolase (423 aa).

Glutamine 166 serves as a coordination point for (2R)-2-phosphoglycerate. The Proton donor role is filled by glutamate 208. Mg(2+) contacts are provided by aspartate 242, glutamate 283, and aspartate 310. 4 residues coordinate (2R)-2-phosphoglycerate: lysine 335, arginine 364, serine 365, and lysine 386. The active-site Proton acceptor is lysine 335.

It belongs to the enolase family. It depends on Mg(2+) as a cofactor.

It is found in the cytoplasm. It localises to the secreted. The protein localises to the cell surface. It catalyses the reaction (2R)-2-phosphoglycerate = phosphoenolpyruvate + H2O. It participates in carbohydrate degradation; glycolysis; pyruvate from D-glyceraldehyde 3-phosphate: step 4/5. In terms of biological role, catalyzes the reversible conversion of 2-phosphoglycerate (2-PG) into phosphoenolpyruvate (PEP). It is essential for the degradation of carbohydrates via glycolysis. The polypeptide is Enolase (Elusimicrobium minutum (strain Pei191)).